The primary structure comprises 243 residues: Proteasome subunit alpha (243 aa).

This sequence belongs to the peptidase T1A family. In terms of assembly, the 20S proteasome core is composed of 14 alpha and 14 beta subunits that assemble into four stacked heptameric rings, resulting in a barrel-shaped structure. The two inner rings, each composed of seven catalytic beta subunits, are sandwiched by two outer rings, each composed of seven alpha subunits. The catalytic chamber with the active sites is on the inside of the barrel. Has a gated structure, the ends of the cylinder being occluded by the N-termini of the alpha-subunits. Is capped at one or both ends by the proteasome regulatory ATPase, PAN.

The protein resides in the cytoplasm. The formation of the proteasomal ATPase PAN-20S proteasome complex, via the docking of the C-termini of PAN into the intersubunit pockets in the alpha-rings, triggers opening of the gate for substrate entry. Interconversion between the open-gate and close-gate conformations leads to a dynamic regulation of the 20S proteasome proteolysis activity. Functionally, component of the proteasome core, a large protease complex with broad specificity involved in protein degradation. This Pyrobaculum aerophilum (strain ATCC 51768 / DSM 7523 / JCM 9630 / CIP 104966 / NBRC 100827 / IM2) protein is Proteasome subunit alpha.